The following is a 356-amino-acid chain: Histidinol-phosphate aminotransferase (356 aa).

At Lys210 the chain carries N6-(pyridoxal phosphate)lysine.

Belongs to the class-II pyridoxal-phosphate-dependent aminotransferase family. Histidinol-phosphate aminotransferase subfamily. As to quaternary structure, homodimer. It depends on pyridoxal 5'-phosphate as a cofactor.

It carries out the reaction L-histidinol phosphate + 2-oxoglutarate = 3-(imidazol-4-yl)-2-oxopropyl phosphate + L-glutamate. It functions in the pathway amino-acid biosynthesis; L-histidine biosynthesis; L-histidine from 5-phospho-alpha-D-ribose 1-diphosphate: step 7/9. The sequence is that of Histidinol-phosphate aminotransferase from Gluconacetobacter diazotrophicus (strain ATCC 49037 / DSM 5601 / CCUG 37298 / CIP 103539 / LMG 7603 / PAl5).